Here is a 157-residue protein sequence, read N- to C-terminus: Transcriptional repressor NrdR (157 aa).

The interval 1-21 (MRCPYCGSEDSQVKDSRPAED) is disordered. The segment at 3-34 (CPYCGSEDSQVKDSRPAEDGNAIRRRRICPDC) is a zinc-finger region. A compositionally biased stretch (basic and acidic residues) spans 11–21 (SQVKDSRPAED). An ATP-cone domain is found at 49 to 139 (LMIIKKTGRK…VYRDFSHAED (91 aa)).

The protein belongs to the NrdR family. It depends on Zn(2+) as a cofactor.

Its function is as follows. Negatively regulates transcription of bacterial ribonucleotide reductase nrd genes and operons by binding to NrdR-boxes. The polypeptide is Transcriptional repressor NrdR (Sinorhizobium medicae (strain WSM419) (Ensifer medicae)).